A 161-amino-acid polypeptide reads, in one-letter code: Probable calcium-binding protein CML16 (161 aa).

EF-hand domains are found at residues 8–43 (DQIK…LGIK), 44–79 (PRGD…DINE), 83–118 (INQE…MGHP), and 119–154 (LTYR…SAAD). Positions 21, 23, 25, 27, 32, 57, 59, 61, 63, 68, 96, 98, 100, 102, 107, 132, 134, 136, and 143 each coordinate Ca(2+).

Potential calcium sensor. The chain is Probable calcium-binding protein CML16 (CML16) from Arabidopsis thaliana (Mouse-ear cress).